The chain runs to 276 residues: Secretagogin (276 aa).

EF-hand domains are found at residues 12–47 (LDAA…MLTK), 71–93 (DVSK…EDEN), 105–140 (DSSV…LFLH), 149–184 (KLEE…QENF), 197–232 (ERKR…MMEL), and 240–276 (VDLD…KINP). Residues Asp71, Ser73, Asp75, Cys77, Glu82, Asp118, Asp120, Ser122, Glu129, Asp162, Asn164, Asp166, Arg168, Asp173, Asp210, Ser212, Thr214, Glu221, Asp254, Asn256, Asp258, Lys260, and Glu265 each contribute to the Ca(2+) site.

The protein resides in the cytoplasm. Its subcellular location is the secreted. The protein localises to the cytoplasmic vesicle. It localises to the secretory vesicle membrane. The sequence is that of Secretagogin (SCGN) from Bos taurus (Bovine).